Reading from the N-terminus, the 1146-residue chain is MSLRFIYGRAGSGKTRFCLEEIKSRITSKATHPLVLLVPEQFTFQAERDLISVLGTGGILKTEVLSFSRIAYRTFNEAGGITYPHIHSAGKCMILYRILDKMKGSFRVFSKTADRQGFVNTLSTLITEFKKYNVTPEDLEKVSKELEEDNPVKEKLMELTAIYDLFEKTIAERYRDPDDDLTLAAKKLGSIPLYDGAEIWIDGFTGFTPQEYQIIGQLMKKAQRVNISFCTDCLDGDLNDTDIFSSIKTAYRKLVKMAKENGIPVEPSVVLNSKPLFRFSQSPELSHLEQYLYAYPYKTYNEKTKDISLFSSVNIFAEVEACARDIVRLCRDRGMRYREIAVVTGNLDGYEKLIEAVFSEYGIPCFIDRKVDIVNHPLVRLIMSMLDIFIENWSYEAVFRYLKTGLTGIDRESIDRLENYVLACGIRGSCWTETEEWKMVPELIPNEKSLEEAKELLEDVNRIRAQVVAPLMEFRKKTKGRKKASDFCASLYDFLCTLGIPEKIEDAIEKFRESGNLNLANEYSQVWNAVMEVFDHTVEVMGDETFGIEKFARILEIGFGECKIGLIPASLDQVLVGSLERSRSHEIKALYILGANDGVFPPAVMEEGILSDQDRAVLNNAGIELASDTRTQAFDGQYLIYRALTTAGNYLRISWSIADHEGRTLRPSLVVFRLRKLFLNITETSNILPSGSLEEEMELLSGNSPAFKSMVSALRQKADGKEIKPVWQEAYRWFAVQDEWRGKCEALRAAFQYKNLAQPVSREKIAALYGEPAVSSVSRLEKYTACPFAFYVQYGLGAKERQIYSLRPPDVGTFMHAVIEKFSRMVAKRNISWRDLDRDWCSEKVSEIVDEMLEKMQGSGIAASRRYTALTLRLKRVVARAVWLIAEHIRRSSFEPVAYEVGFGENGKYPPIVIELDSGEKIHLTGRIDRVDALKTEDGTYLRIVDYKSGGKDFKLSDVFYGLQIQLITYLDALWESGEADENNPVLPGGVLYFKIDDPIIRGNGRMTEEEIEKAIMKQLRMKGLLLADVKLIREMDKDIEGSSMIIPATVNKDGSLGKNTSAATMEQFKLLRKYVRKLLKNLCEEIMKGNVSINPYKKKGTTSCKYCSFLPVCQFDTTMKENTFKLLYDKKDDEIWSLMAQEEEE.

The region spanning 1-280 is the UvrD-like helicase ATP-binding domain; that stretch reads MSLRFIYGRA…LNSKPLFRFS (280 aa). Position 8–15 (8–15) interacts with ATP; that stretch reads GRAGSGKT. A UvrD-like helicase C-terminal domain is found at 276-584; it reads LFRFSQSPEL…LVGSLERSRS (309 aa). Residues Cys-786, Cys-1105, Cys-1108, and Cys-1114 each contribute to the [4Fe-4S] cluster site.

The protein belongs to the helicase family. AddB/RexB type 1 subfamily. Heterodimer of AddA and AddB. The cofactor is Mg(2+). [4Fe-4S] cluster serves as cofactor.

Its function is as follows. The heterodimer acts as both an ATP-dependent DNA helicase and an ATP-dependent, dual-direction single-stranded exonuclease. Recognizes the chi site generating a DNA molecule suitable for the initiation of homologous recombination. The AddB subunit has 5' -&gt; 3' nuclease activity but not helicase activity. In Acetivibrio thermocellus (strain ATCC 27405 / DSM 1237 / JCM 9322 / NBRC 103400 / NCIMB 10682 / NRRL B-4536 / VPI 7372) (Clostridium thermocellum), this protein is ATP-dependent helicase/deoxyribonuclease subunit B.